The primary structure comprises 67 residues: Protein AaeX (67 aa).

2 consecutive transmembrane segments (helical) span residues 3–23 (LFPVIVVFGLSFPPIFFELLL) and 43–63 (FVWHPALFNTALYCCLFYLIS).

The protein belongs to the AaeX family.

The protein resides in the cell membrane. This Salmonella agona (strain SL483) protein is Protein AaeX.